Here is a 530-residue protein sequence, read N- to C-terminus: Bifunctional purine biosynthesis protein PurH (530 aa).

An MGS-like domain is found at 1–148; it reads MNNARPIRRA…KNHKDVTIVV (148 aa).

The protein belongs to the PurH family.

The enzyme catalyses (6R)-10-formyltetrahydrofolate + 5-amino-1-(5-phospho-beta-D-ribosyl)imidazole-4-carboxamide = 5-formamido-1-(5-phospho-D-ribosyl)imidazole-4-carboxamide + (6S)-5,6,7,8-tetrahydrofolate. It catalyses the reaction IMP + H2O = 5-formamido-1-(5-phospho-D-ribosyl)imidazole-4-carboxamide. It participates in purine metabolism; IMP biosynthesis via de novo pathway; 5-formamido-1-(5-phospho-D-ribosyl)imidazole-4-carboxamide from 5-amino-1-(5-phospho-D-ribosyl)imidazole-4-carboxamide (10-formyl THF route): step 1/1. The protein operates within purine metabolism; IMP biosynthesis via de novo pathway; IMP from 5-formamido-1-(5-phospho-D-ribosyl)imidazole-4-carboxamide: step 1/1. The polypeptide is Bifunctional purine biosynthesis protein PurH (Aliivibrio fischeri (strain ATCC 700601 / ES114) (Vibrio fischeri)).